A 208-amino-acid chain; its full sequence is MVQRSKSSANWLREHFNDPFVKQAQKDGYRSRASYKLLEIQEKDRLIRPGMSVIDLGAAPGGWSQVTSRLIGGQGRLIASDILEMDSIPDVTFIQGDFTQDEVLQQILQAVGDSHVDLVISDMAPNMSGTPAVDMPRAMFLCELALDLATRVLKPGGDFLIKIFQGEGFDMYLKDVRSKFDKVQMRKPSSSRDRSREQYLLGKGFKGA.

Residues glycine 61, tryptophan 63, aspartate 81, aspartate 97, and aspartate 122 each contribute to the S-adenosyl-L-methionine site. The Proton acceptor role is filled by lysine 162.

Belongs to the class I-like SAM-binding methyltransferase superfamily. RNA methyltransferase RlmE family.

Its subcellular location is the cytoplasm. It catalyses the reaction uridine(2552) in 23S rRNA + S-adenosyl-L-methionine = 2'-O-methyluridine(2552) in 23S rRNA + S-adenosyl-L-homocysteine + H(+). Specifically methylates the uridine in position 2552 of 23S rRNA at the 2'-O position of the ribose in the fully assembled 50S ribosomal subunit. The protein is Ribosomal RNA large subunit methyltransferase E of Pseudomonas entomophila (strain L48).